The primary structure comprises 113 residues: Hydrogenase maturation factor HypA (113 aa).

His2 serves as a coordination point for Ni(2+). Zn(2+)-binding residues include Cys73, Cys76, Cys89, and Cys92.

It belongs to the HypA/HybF family.

Its function is as follows. Involved in the maturation of [NiFe] hydrogenases. Required for nickel insertion into the metal center of the hydrogenase. This Rhizobium leguminosarum bv. viciae protein is Hydrogenase maturation factor HypA.